Consider the following 410-residue polypeptide: Peptidase T (410 aa).

Zn(2+) is bound at residue His-78. Asp-80 is a catalytic residue. A Zn(2+)-binding site is contributed by Asp-140. Glu-173 (proton acceptor) is an active-site residue. Zn(2+)-binding residues include Glu-174, Asp-196, and His-379.

It belongs to the peptidase M20B family. The cofactor is Zn(2+).

The protein localises to the cytoplasm. It carries out the reaction Release of the N-terminal residue from a tripeptide.. Functionally, cleaves the N-terminal amino acid of tripeptides. In Pectobacterium atrosepticum (strain SCRI 1043 / ATCC BAA-672) (Erwinia carotovora subsp. atroseptica), this protein is Peptidase T.